Here is a 209-residue protein sequence, read N- to C-terminus: uncharacterized protein (209 aa).

Residues 1 to 17 form the signal peptide; that stretch reads MKRLVTGLLALSLFLAA. A disordered region spans residues 17–105; that stretch reads ACGQDSDQQK…SNNQANNNQK (89 aa). C18 is lipidated: N-palmitoyl cysteine. C18 carries the S-diacylglycerol cysteine lipid modification. A compositionally biased stretch (basic and acidic residues) spans 23–70; sequence DQQKDSNKEKDDKAKTEQQDEKTNDSSKDKKDKKDDSKDVNKDNKDNS. Residues 71-105 show a composition bias toward low complexity; sequence ANDNQQQSNSNATNNDQNQTNNNQSSNNQANNNQK.

The protein resides in the cell membrane. This is an uncharacterized protein from Staphylococcus aureus (strain bovine RF122 / ET3-1).